The primary structure comprises 119 residues: Large ribosomal subunit protein eL31 (119 aa).

It belongs to the eukaryotic ribosomal protein eL31 family.

The protein is Large ribosomal subunit protein eL31 (RPL31) of Cyanophora paradoxa.